The chain runs to 203 residues: ATP-dependent Clp protease proteolytic subunit 2 (203 aa).

Catalysis depends on S100, which acts as the Nucleophile. H125 is a catalytic residue.

The protein belongs to the peptidase S14 family. In terms of assembly, fourteen ClpP subunits assemble into 2 heptameric rings which stack back to back to give a disk-like structure with a central cavity, resembling the structure of eukaryotic proteasomes.

It is found in the cytoplasm. The enzyme catalyses Hydrolysis of proteins to small peptides in the presence of ATP and magnesium. alpha-casein is the usual test substrate. In the absence of ATP, only oligopeptides shorter than five residues are hydrolyzed (such as succinyl-Leu-Tyr-|-NHMec, and Leu-Tyr-Leu-|-Tyr-Trp, in which cleavage of the -Tyr-|-Leu- and -Tyr-|-Trp bonds also occurs).. Cleaves peptides in various proteins in a process that requires ATP hydrolysis. Has a chymotrypsin-like activity. Plays a major role in the degradation of misfolded proteins. This Nocardia farcinica (strain IFM 10152) protein is ATP-dependent Clp protease proteolytic subunit 2.